Here is a 277-residue protein sequence, read N- to C-terminus: Sulfur carrier protein FdhD (277 aa).

The active-site Cysteine persulfide intermediate is the C123.

The protein belongs to the FdhD family.

It localises to the cytoplasm. In terms of biological role, required for formate dehydrogenase (FDH) activity. Acts as a sulfur carrier protein that transfers sulfur from IscS to the molybdenum cofactor prior to its insertion into FDH. This Pectobacterium atrosepticum (strain SCRI 1043 / ATCC BAA-672) (Erwinia carotovora subsp. atroseptica) protein is Sulfur carrier protein FdhD.